Here is a 328-residue protein sequence, read N- to C-terminus: GMP reductase (328 aa).

Cys176 serves as the catalytic Thioimidate intermediate. Position 205 to 228 (205 to 228) interacts with NADP(+); the sequence is IIADGGIRTHGDIAKSIRFGASMI.

It belongs to the IMPDH/GMPR family. GuaC type 2 subfamily.

The catalysed reaction is IMP + NH4(+) + NADP(+) = GMP + NADPH + 2 H(+). Its function is as follows. Catalyzes the irreversible NADPH-dependent deamination of GMP to IMP. It functions in the conversion of nucleobase, nucleoside and nucleotide derivatives of G to A nucleotides, and in maintaining the intracellular balance of A and G nucleotides. The polypeptide is GMP reductase (Streptococcus pneumoniae serotype 19F (strain G54)).